A 407-amino-acid polypeptide reads, in one-letter code: 1-deoxy-D-xylulose 5-phosphate reductoisomerase (407 aa).

The NADPH site is built by Thr-22, Gly-23, Ser-24, Ile-25, Gly-48, Asn-51, and Asn-128. Position 129 (Lys-129) interacts with 1-deoxy-D-xylulose 5-phosphate. Glu-130 provides a ligand contact to NADPH. Asp-152 provides a ligand contact to Mn(2+). Positions 153, 154, 178, and 201 each coordinate 1-deoxy-D-xylulose 5-phosphate. Residue Glu-154 coordinates Mn(2+). NADPH is bound at residue Gly-207. Ser-214, Asn-219, Lys-220, and Glu-223 together coordinate 1-deoxy-D-xylulose 5-phosphate. A Mn(2+)-binding site is contributed by Glu-223.

This sequence belongs to the DXR family. Mg(2+) is required as a cofactor. The cofactor is Mn(2+).

The catalysed reaction is 2-C-methyl-D-erythritol 4-phosphate + NADP(+) = 1-deoxy-D-xylulose 5-phosphate + NADPH + H(+). The protein operates within isoprenoid biosynthesis; isopentenyl diphosphate biosynthesis via DXP pathway; isopentenyl diphosphate from 1-deoxy-D-xylulose 5-phosphate: step 1/6. Its function is as follows. Catalyzes the NADPH-dependent rearrangement and reduction of 1-deoxy-D-xylulose-5-phosphate (DXP) to 2-C-methyl-D-erythritol 4-phosphate (MEP). This chain is 1-deoxy-D-xylulose 5-phosphate reductoisomerase, found in Mycobacterium avium (strain 104).